We begin with the raw amino-acid sequence, 243 residues long: Probable 2-phosphosulfolactate phosphatase (243 aa).

The protein belongs to the ComB family. Mg(2+) serves as cofactor.

It catalyses the reaction (2R)-O-phospho-3-sulfolactate + H2O = (2R)-3-sulfolactate + phosphate. This chain is Probable 2-phosphosulfolactate phosphatase, found in Prochlorococcus marinus (strain SARG / CCMP1375 / SS120).